A 199-amino-acid chain; its full sequence is MIHDYHITHFLISVPAVYCLPNEKIGMEVAFVGYSNSGKSSAINALTYQKKLTKVSKTPGCTQLINLFEVSPGIRLIDFPGYGYAKKTKKRKNYWHDVICEYLKKRKNLKGLILMMDIRHPIKDLDQKTIESALSVDVPVFTLLSKSDKISRNILQVTSKKIIHDMKMMFETHIQVEPFSVVKKYGIHSLKRVLNNWLR.

Positions 25-199 (IGMEVAFVGY…LKRVLNNWLR (175 aa)) constitute an EngB-type G domain. Residues serine 40 and threonine 62 each coordinate Mg(2+).

It belongs to the TRAFAC class TrmE-Era-EngA-EngB-Septin-like GTPase superfamily. EngB GTPase family. Mg(2+) is required as a cofactor.

In terms of biological role, necessary for normal cell division and for the maintenance of normal septation. In Blochmanniella pennsylvanica (strain BPEN), this protein is Probable GTP-binding protein EngB.